Here is a 288-residue protein sequence, read N- to C-terminus: MERAPGSERRSPPGPGVPRPPPRGHAPSTAAPAPNPAPLSSSMQPDEERQPRISESGQFSDGFEDRGLLESSTRLKPHEAQNYRKKALWVSWLSIIVTLALAVAAFTVSVMRYSASAFGFAFDAILDVLSSAIVLWRYSNAAAVHSAHREYIACVILGVIFLLSSICIVVKAIHDLSTRLLPEVDDFLFSVSILSGILCSVLAVLKFMLGKVLTSRALITDGFNSLVGGVMGFSILLSAEVFKHNAAVWYLDGSIGVLIGLTIFAYGVKLLIDMVPRVRQTRHYEMFE.

Residues 1-11 (MERAPGSERRS) are compositionally biased toward basic and acidic residues. The disordered stretch occupies residues 1-64 (MERAPGSERR…ESGQFSDGFE (64 aa)). Residues 1–87 (MERAPGSERR…HEAQNYRKKA (87 aa)) lie on the Cytoplasmic side of the membrane. The residue at position 11 (serine 11) is a Phosphoserine. Pro residues predominate over residues 12-24 (PPGPGVPRPPPRG). Positions 25-42 (HAPSTAAPAPNPAPLSSS) are enriched in low complexity. The segment at 41–71 (SSMQPDEERQPRISESGQFSDGFEDRGLLES) is required for interaction with MCOLN1. Residues serine 54, serine 56, and serine 60 each carry the phosphoserine modification. The helical transmembrane segment at 88-108 (LWVSWLSIIVTLALAVAAFTV) threads the bilayer. Topologically, residues 109–115 (SVMRYSA) are extracellular. A helical transmembrane segment spans residues 116–136 (SAFGFAFDAILDVLSSAIVLW). The Cytoplasmic portion of the chain corresponds to 137 to 149 (RYSNAAAVHSAHR). The helical transmembrane segment at 150-170 (EYIACVILGVIFLLSSICIVV) threads the bilayer. The Extracellular portion of the chain corresponds to 171 to 186 (KAIHDLSTRLLPEVDD). A helical membrane pass occupies residues 187–207 (FLFSVSILSGILCSVLAVLKF). The Cytoplasmic portion of the chain corresponds to 208–216 (MLGKVLTSR). A helical membrane pass occupies residues 217–237 (ALITDGFNSLVGGVMGFSILL). Topologically, residues 238-254 (SAEVFKHNAAVWYLDGS) are extracellular. The helical transmembrane segment at 255–275 (IGVLIGLTIFAYGVKLLIDMV) threads the bilayer. Residues 276-288 (PRVRQTRHYEMFE) are Cytoplasmic-facing.

The protein belongs to the TMEM163 family. In terms of assembly, homodimer. Interacts with MCOLN1. Interacts with SLC30A1, SLC30A2, SLC30A3 and SLC30A4. Strongly expressed in brain. Also detected in lung, liver, kidney and spleen. Mainly expressed in the glutaminergic neuron subpopulations.

The protein resides in the cytoplasmic vesicle. The protein localises to the secretory vesicle. It localises to the synaptic vesicle membrane. Its subcellular location is the early endosome membrane. It is found in the late endosome membrane. The protein resides in the lysosome membrane. The protein localises to the cell membrane. The enzyme catalyses Zn(2+)(in) = Zn(2+)(out). Its function is as follows. Zinc ion transporter that mediates zinc efflux and plays a crucial role in intracellular zinc homeostasis. Binds the divalent cations Zn(2+), Ni(2+), and to a minor extent Cu(2+). Is a functional modulator of P2X purinoceptors, including P2RX1, P2RX3, P2RX4 and P2RX7. Plays a role in central nervous system development and is required for myelination, and survival and proliferation of oligodendrocytes. In Rattus norvegicus (Rat), this protein is Transmembrane protein 163 (Tmem163).